The following is a 295-amino-acid chain: Elongation factor Ts (295 aa).

Positions 79–82 are involved in Mg(2+) ion dislocation from EF-Tu; that stretch reads TDFV.

It belongs to the EF-Ts family.

The protein resides in the cytoplasm. In terms of biological role, associates with the EF-Tu.GDP complex and induces the exchange of GDP to GTP. It remains bound to the aminoacyl-tRNA.EF-Tu.GTP complex up to the GTP hydrolysis stage on the ribosome. This is Elongation factor Ts from Bacillus cereus (strain G9842).